A 541-amino-acid polypeptide reads, in one-letter code: MSAKDVKFAADARERLIRGVDILANAVKVTLGPKGRNVLIEKSFGAPRITKDGVTVAKEIELEDKYENLGAQLLRQVASKTNDLAGDGTTTATVLAQAIVREGAKAVAASLNPLDLKRGIDLAVAEAIKDIEKRARKVQSSEEVAQVGTISANSDAAVGKIIATAVKKVGNDGVITVEEAKSLETELDVVEGLQFDRGYLSPYFVTNSDKLLVEFEEPYILIHESKLTSLQPLLPVLEAVVQTGRPLLVIAEDVEGEALATLVVNKLRGGLKVAAVKAPGFGDRRKAQLEDIAILTGGQTISQDLGIKLENVTLSQLGRARRIRIDKENTTVVGGTGKKKDIDARIAQIRAQIEETTSDYDREKLQERLAKLSGGVAVIRVGGATEVEVKEKKDRVDDALNATRAAIAEGIVPGGGVALLRAKAAVSKLTNPNPDIQAGIQIVLKALEAPIRQIADNAGVEGSIVVGKILENRSPTFGFDAQKEEYVDLIEAGIVDPAKVVRTALQDAASVAALIVTTEALVVELPKEKAALPAAGAGADF.

ATP contacts are provided by residues 30–33, Lys51, 87–91, Gly415, and Asp496; these read TLGP and DGTTT.

Belongs to the chaperonin (HSP60) family. As to quaternary structure, forms a cylinder of 14 subunits composed of two heptameric rings stacked back-to-back. Interacts with the co-chaperonin GroES.

It is found in the cytoplasm. The catalysed reaction is ATP + H2O + a folded polypeptide = ADP + phosphate + an unfolded polypeptide.. Its function is as follows. Together with its co-chaperonin GroES, plays an essential role in assisting protein folding. The GroEL-GroES system forms a nano-cage that allows encapsulation of the non-native substrate proteins and provides a physical environment optimized to promote and accelerate protein folding. This is Chaperonin GroEL 2 from Bradyrhizobium sp. (strain BTAi1 / ATCC BAA-1182).